Reading from the N-terminus, the 95-residue chain is MSFKFEAEVRSAQGKGASRRLRHNGQVPAIIYGGNAEPVSIILDHDKVNNAQAHDAFYNEVLTIVVAGKEEQVKVQAIQRHPTKPKLVHLDFKRA.

This sequence belongs to the bacterial ribosomal protein bL25 family. As to quaternary structure, part of the 50S ribosomal subunit; part of the 5S rRNA/L5/L18/L25 subcomplex. Contacts the 5S rRNA. Binds to the 5S rRNA independently of L5 and L18.

In terms of biological role, this is one of the proteins that binds to the 5S RNA in the ribosome where it forms part of the central protuberance. This Actinobacillus pleuropneumoniae serotype 3 (strain JL03) protein is Large ribosomal subunit protein bL25.